The chain runs to 216 residues: GTP cyclohydrolase 1 (216 aa).

Positions 1–33 (MPQARGEGATPPTSLPNPSLKGVPLPDNPNNLE) are disordered. A compositionally biased stretch (low complexity) spans 24–33 (PLPDNPNNLE). Residues Cys102, His105, and Cys173 each contribute to the Zn(2+) site.

It belongs to the GTP cyclohydrolase I family. In terms of assembly, toroid-shaped homodecamer, composed of two pentamers of five dimers.

The catalysed reaction is GTP + H2O = 7,8-dihydroneopterin 3'-triphosphate + formate + H(+). Its pathway is cofactor biosynthesis; 7,8-dihydroneopterin triphosphate biosynthesis; 7,8-dihydroneopterin triphosphate from GTP: step 1/1. This chain is GTP cyclohydrolase 1 (folE), found in Deinococcus radiodurans (strain ATCC 13939 / DSM 20539 / JCM 16871 / CCUG 27074 / LMG 4051 / NBRC 15346 / NCIMB 9279 / VKM B-1422 / R1).